The sequence spans 461 residues: Probable ribonuclease FAU-1 (461 aa).

An S1 motif domain is found at 89–158 (GAVFYGEVTE…ARPSLATALR (70 aa)).

This sequence belongs to the FAU-1 family.

Functionally, probable RNase involved in rRNA stability through maturation and/or degradation of precursor rRNAs. Binds to RNA in loop regions with AU-rich sequences. In Natronomonas pharaonis (strain ATCC 35678 / DSM 2160 / CIP 103997 / JCM 8858 / NBRC 14720 / NCIMB 2260 / Gabara) (Halobacterium pharaonis), this protein is Probable ribonuclease FAU-1.